The sequence spans 706 residues: Amino-acid acetyltransferase, mitochondrial (706 aa).

Disordered stretches follow at residues 1–25 (MSSR…GAGD) and 367–403 (NPAN…PAKQ). The transit peptide at 1-35 (MSSRVLASRAAQPLKRHPTVVGAGDEAYPTPRRCF) directs the protein to the mitochondrion. Polar residues predominate over residues 367 to 388 (NPANNSQGESVVTNPISDSNAV). Positions 389-401 (SESASTEPTSTPA) are enriched in low complexity. In terms of domain architecture, N-acetyltransferase spans 527–696 (TRPNMNLDDP…YEAVCRSIQP (170 aa)).

This sequence belongs to the acetyltransferase family.

Its subcellular location is the mitochondrion. The enzyme catalyses L-glutamate + acetyl-CoA = N-acetyl-L-glutamate + CoA + H(+). Its pathway is amino-acid biosynthesis; L-arginine biosynthesis; N(2)-acetyl-L-ornithine from L-glutamate: step 1/4. Functionally, N-acetylglutamate synthase involved in arginine biosynthesis. This is Amino-acid acetyltransferase, mitochondrial (arg2) from Emericella nidulans (strain FGSC A4 / ATCC 38163 / CBS 112.46 / NRRL 194 / M139) (Aspergillus nidulans).